Here is a 690-residue protein sequence, read N- to C-terminus: MIRKEVDFGGRRLQLETGRMARQADGAVLVSSGDTVVLVTAVGRREMKPGQDFFPLTVNYQEKAYAAGKIPGGFFKREGRPTEKETLTSRLIDRPIRPLFPKGFMNEVQVIATVVSVDRDNDPDILALVGASAALAVSGIPFNGPIGAARVAYIDGKYVLNPSYAQLTTSQLDLVVAGTRQAVLMVESEAQQLSEEIMLEAVMFGHAQFQPVIETIEALAREAGKPRWEWVAPVADEALGVQVREKATPLLQEAYALTEKQARSKRLEDVQQAMAVEFGSDDAGRGDMVRGLLKKIETGIVRGRILDGAPRIDGRDSKTVRPITIEAGVLPRTHGSALFTRGETQALVVATLGTKGDEQIIDALQGESRDRFMLHYNFPPFSTGETGMVGSPKRREIGHGRLAKRAIAAVLPTDSEFPYSLRVVSEVLESNGSSSMATVCGASLALMDAGVPLKAPVAGVAMGLIKEGARFAVLTDILGDEDHLGDMDFKVAGTEQGVTALQMDIKIDGITREIMAQALQQALAGRLHILGLMNGVLSRGRGELSDYAPRIITIQINPDRIRDVIGPGGKVIRALTEETGATIDIQDNGTVTIASVDGEAGAAAKRRIELLTADVQVDTIYDGKVAKIMDFGAFVTILPGRDGLLHISQISNERVSDVHDHLKEGQAVRVKVLEVDRQGKIKLSMKDIPQ.

Mg(2+) contacts are provided by D482 and D488. The KH domain occupies 549 to 608 (PRIITIQINPDRIRDVIGPGGKVIRALTEETGATIDIQDNGTVTIASVDGEAGAAAKRRI). Residues 618-686 (DTIYDGKVAK…RQGKIKLSMK (69 aa)) enclose the S1 motif domain.

It belongs to the polyribonucleotide nucleotidyltransferase family. In terms of assembly, component of the RNA degradosome, which is a multiprotein complex involved in RNA processing and mRNA degradation. The cofactor is Mg(2+).

It is found in the cytoplasm. The enzyme catalyses RNA(n+1) + phosphate = RNA(n) + a ribonucleoside 5'-diphosphate. Functionally, involved in mRNA degradation. Catalyzes the phosphorolysis of single-stranded polyribonucleotides processively in the 3'- to 5'-direction. The chain is Polyribonucleotide nucleotidyltransferase from Acidithiobacillus ferrooxidans (strain ATCC 23270 / DSM 14882 / CIP 104768 / NCIMB 8455) (Ferrobacillus ferrooxidans (strain ATCC 23270)).